Consider the following 285-residue polypeptide: ATP phosphoribosyltransferase (285 aa).

The protein belongs to the ATP phosphoribosyltransferase family. Long subfamily. It depends on Mg(2+) as a cofactor.

It is found in the cytoplasm. The catalysed reaction is 1-(5-phospho-beta-D-ribosyl)-ATP + diphosphate = 5-phospho-alpha-D-ribose 1-diphosphate + ATP. The protein operates within amino-acid biosynthesis; L-histidine biosynthesis; L-histidine from 5-phospho-alpha-D-ribose 1-diphosphate: step 1/9. Its activity is regulated as follows. Feedback inhibited by histidine. Its function is as follows. Catalyzes the condensation of ATP and 5-phosphoribose 1-diphosphate to form N'-(5'-phosphoribosyl)-ATP (PR-ATP). Has a crucial role in the pathway because the rate of histidine biosynthesis seems to be controlled primarily by regulation of HisG enzymatic activity. The polypeptide is ATP phosphoribosyltransferase (Streptomyces avermitilis (strain ATCC 31267 / DSM 46492 / JCM 5070 / NBRC 14893 / NCIMB 12804 / NRRL 8165 / MA-4680)).